We begin with the raw amino-acid sequence, 515 residues long: ATP synthase subunit alpha (515 aa).

171-178 (GDRQTGKT) contributes to the ATP binding site.

Belongs to the ATPase alpha/beta chains family. F-type ATPases have 2 components, CF(1) - the catalytic core - and CF(0) - the membrane proton channel. CF(1) has five subunits: alpha(3), beta(3), gamma(1), delta(1), epsilon(1). CF(0) has three main subunits: a(1), b(2) and c(9-12). The alpha and beta chains form an alternating ring which encloses part of the gamma chain. CF(1) is attached to CF(0) by a central stalk formed by the gamma and epsilon chains, while a peripheral stalk is formed by the delta and b chains.

The protein localises to the cell inner membrane. The catalysed reaction is ATP + H2O + 4 H(+)(in) = ADP + phosphate + 5 H(+)(out). Produces ATP from ADP in the presence of a proton gradient across the membrane. The alpha chain is a regulatory subunit. The polypeptide is ATP synthase subunit alpha (Coxiella burnetii (strain CbuK_Q154) (Coxiella burnetii (strain Q154))).